The primary structure comprises 524 residues: Probable serine/threonine-protein kinase WNK10 (524 aa).

The Protein kinase domain maps to 16–273; it reads IRYNDVLGRG…ALELLKDQLL (258 aa). ATP is bound by residues 96–99 and K146; that span reads TELF. D163 acts as the Proton acceptor in catalysis. S477 carries the post-translational modification Phosphoserine. Positions 480-523 form a coiled coil; sequence SNKQSEDLKTELNVIESQYNQSCQRLLRMKEEAIEKAKRKWMKL.

Belongs to the protein kinase superfamily. Ser/Thr protein kinase family. WNK subfamily.

The enzyme catalyses L-seryl-[protein] + ATP = O-phospho-L-seryl-[protein] + ADP + H(+). It carries out the reaction L-threonyl-[protein] + ATP = O-phospho-L-threonyl-[protein] + ADP + H(+). Its function is as follows. May regulate flowering time by modulating the photoperiod pathway. The protein is Probable serine/threonine-protein kinase WNK10 (WNK10) of Arabidopsis thaliana (Mouse-ear cress).